The primary structure comprises 440 residues: Cytochrome P450 monooygenase 1 (440 aa).

Residue Cys381 coordinates heme.

The protein belongs to the cytochrome P450 family. Heme is required as a cofactor.

It functions in the pathway plant hormone biosynthesis; gibberellin biosynthesis. GA14 synthase; part of the gene cluster that mediates the biosynthesis of gibberellins (GAs), diterpenoids that may provide a selective advantage during infection of the preferred host plant, rice. Gibberellins (GAs) are diterpenoids and are synthesized via the mevalonate pathway. Biosynthesis of the major metabolite GA3 (gibberellic acid) from geranylgeranyl diphosphate (GGPP) requires 13 steps. The GGPP produced by the geranylgeranyl diphosphate synthase GGS2 is converted to ent-kaurene via ent-copalyldiphosphate in a two-step cyclization reaction performed by the bifunctional ent-copalyl diphosphate synthase/ent-kaurene synthase enzyme (CPS/KS). Ent-Kaurene is metabolized to GAs by a series of oxidation reactions catalyzed by cytochrome P450 monooxygenases. Cytochrome P450 monooxygenase P450-4 is an ent-kaurene oxidase that catalyzes the three oxidation steps between ent-kaurene and ent-kaurenoic acid. The highly multifunctional cytochrome P450 monooxygenase P450-1 then catalyzes four steps involving oxidation at two carbon atoms, in the main pathway from ent-kaurenoic acid to GA14 via GA12-aldehyde as well as producing kaurenolides and fujenoic acids as by-products. The cytochrome P450 monooxygenase P450-2 then converts GA14 to GA4 by removal of C-20. GA4 is further converted to GA7 by the GA4 desaturase DES via 1,2-desaturation before cytochrome P450 monooxygenase P450-3, a 13-hydroxylase, hydroxylates GA7 to GA3, the final product of the GA-biosynthetic pathway. The chain is Cytochrome P450 monooygenase 1 from Gibberella fujikuroi (strain CBS 195.34 / IMI 58289 / NRRL A-6831) (Bakanae and foot rot disease fungus).